The chain runs to 338 residues: Nickel transporter NixA (338 aa).

Helical transmembrane passes span 11–31 (WLPYIAIVILLHVIGFSFLWI), 37–57 (HILFGMGILAYTLGLRHAFDA), 79–99 (GVGFYFSIGHSSVVFLMAVFL), 127–147 (FFLVLIGVLNLIILISLINLF), 187–207 (VLPLGFLFGLGFDTASEIALL), 217–237 (AISFIGILSLPILFASGMSLL), 266–286 (ITAISVMAALVIGMIELLQIL), and 307–327 (YLGYILVALFLITWLISSLIW).

This sequence belongs to the NiCoT transporter (TC 2.A.52) family.

It is found in the cell membrane. Functionally, secondary nickel transporter. Required for full urease activity. The protein is Nickel transporter NixA of Staphylococcus aureus (strain NCTC 8325 / PS 47).